We begin with the raw amino-acid sequence, 122 residues long: Large ribosomal subunit protein uL14 (122 aa).

This sequence belongs to the universal ribosomal protein uL14 family. Part of the 50S ribosomal subunit. Forms a cluster with proteins L3 and L19. In the 70S ribosome, L14 and L19 interact and together make contacts with the 16S rRNA in bridges B5 and B8.

Its function is as follows. Binds to 23S rRNA. Forms part of two intersubunit bridges in the 70S ribosome. This chain is Large ribosomal subunit protein uL14, found in Caldanaerobacter subterraneus subsp. tengcongensis (strain DSM 15242 / JCM 11007 / NBRC 100824 / MB4) (Thermoanaerobacter tengcongensis).